A 499-amino-acid chain; its full sequence is Sensor histidine kinase PdtaS (499 aa).

Positions 4-149 (LGDLLAEHTM…PLEGAYLDCA (146 aa)) are GAF. The PAS-like stretch occupies residues 178-289 (DGFIRLNEGG…TEVKRRDRAL (112 aa)). In terms of domain architecture, Histidine kinase spans 298 to 493 (EIHHRVKNNL…DVVLRVPIGR (196 aa)). At His-301 the chain carries Phosphohistidine; by autocatalysis.

Post-translationally, autophosphorylated.

The protein resides in the cytoplasm. It catalyses the reaction ATP + protein L-histidine = ADP + protein N-phospho-L-histidine.. Functionally, member of the two-component regulatory system PdtaR/PdtaS. This two-component system plays an essential role in mycobacterial adaptation to poor nutrient conditions. Nutrient deprivation results in increasing intracellular concentrations of cyclic diguanosine monophosphate (c-di-GMP), which binds to the PdtaS sensor and promotes its autophosphorylation, leading to the activation of the signaling cascade. The phosphate group is then transferred to PdtaR. The sequence is that of Sensor histidine kinase PdtaS from Mycolicibacterium smegmatis (strain ATCC 700084 / mc(2)155) (Mycobacterium smegmatis).